The primary structure comprises 384 residues: Lipid-A-disaccharide synthase 1 (384 aa).

Belongs to the LpxB family.

It carries out the reaction a lipid X + a UDP-2-N,3-O-bis[(3R)-3-hydroxyacyl]-alpha-D-glucosamine = a lipid A disaccharide + UDP + H(+). Its pathway is bacterial outer membrane biogenesis; LPS lipid A biosynthesis. Condensation of UDP-2,3-diacylglucosamine and 2,3-diacylglucosamine-1-phosphate to form lipid A disaccharide, a precursor of lipid A, a phosphorylated glycolipid that anchors the lipopolysaccharide to the outer membrane of the cell. The sequence is that of Lipid-A-disaccharide synthase 1 from Legionella pneumophila (strain Lens).